Here is a 308-residue protein sequence, read N- to C-terminus: GMP synthase [glutamine-hydrolyzing] subunit B (308 aa).

A GMPS ATP-PPase domain is found at 1–185 (MDWGRFVEEK…LGLPEKIYNR (185 aa)). 28-34 (SGGVDSS) contacts ATP.

In terms of assembly, heterodimer composed of a glutamine amidotransferase subunit (A) and a GMP-binding subunit (B).

The catalysed reaction is XMP + L-glutamine + ATP + H2O = GMP + L-glutamate + AMP + diphosphate + 2 H(+). It functions in the pathway purine metabolism; GMP biosynthesis; GMP from XMP (L-Gln route): step 1/1. Its function is as follows. Catalyzes the synthesis of GMP from XMP. The chain is GMP synthase [glutamine-hydrolyzing] subunit B (guaAB) from Pyrococcus horikoshii (strain ATCC 700860 / DSM 12428 / JCM 9974 / NBRC 100139 / OT-3).